The primary structure comprises 262 residues: Phosphonates import ATP-binding protein PhnC (262 aa).

The ABC transporter domain maps to 5–253; sequence IRVEKLAKTF…RFDHLYRSIN (249 aa). 37–44 serves as a coordination point for ATP; the sequence is GPSGSGKS.

Belongs to the ABC transporter superfamily. Phosphonates importer (TC 3.A.1.9.1) family. The complex is composed of two ATP-binding proteins (PhnC), two transmembrane proteins (PhnE) and a solute-binding protein (PhnD).

It localises to the cell inner membrane. The enzyme catalyses phosphonate(out) + ATP + H2O = phosphonate(in) + ADP + phosphate + H(+). In terms of biological role, part of the ABC transporter complex PhnCDE involved in phosphonates import. Responsible for energy coupling to the transport system. This Shigella flexneri serotype 5b (strain 8401) protein is Phosphonates import ATP-binding protein PhnC.